The following is a 508-amino-acid chain: MMLWYIVAGAGGLLIGYLIANYQINQKLRKAKEDAQTIIEKAEKEANEIKKKAIIEGREEVHRLREEFEKERSRREEELRALEERLLKREELLTRKEENLEKREQQVEELKANLEEKMREVEEKEKRIDEELKRLAGMTVEEARELILEEARQRYEHDLAKLYKEMKEQVEEEAEKEAKKVIAFAVQRYAPDYVGEITVSTVSLPSDDMKGRIIGREGRNIRTFEKITGVDLIIDDTPEVVVLSCFNPLRREIARITLEKLVADGRIHPARIEEMYEKAKQEVEKAIKEAGQEATFKAGVMGLHPELVKLLGKLKYRTSYGQNVLNHSIEVALLAGYMASELGLNADKARRGGLLHDIGKAVDQELEGSHTTIGAELARRYGEKEDIINMILSHHGEEEPMTPEAVLVAAADALSAARPGARRESLENYIKRLMKLEEIAKSFKYVEKAYAIQAGREIRVIVEPDKVDDALAEKLAYDISKKIEEELEYPGVLKVVVIREKRSVAYAK.

A helical transmembrane segment spans residues 1-21 (MMLWYIVAGAGGLLIGYLIAN). A KH domain is found at 198 to 283 (TVSTVSLPSD…EMYEKAKQEV (86 aa)). Residues 324–417 (VLNHSIEVAL…VAAADALSAA (94 aa)) enclose the HD domain.

It belongs to the RNase Y family.

It localises to the cell membrane. In terms of biological role, endoribonuclease that initiates mRNA decay. In Thermotoga maritima (strain ATCC 43589 / DSM 3109 / JCM 10099 / NBRC 100826 / MSB8), this protein is Ribonuclease Y.